Reading from the N-terminus, the 591-residue chain is CTP synthase (591 aa).

Residues 1 to 281 (MPQSRTHSRT…DAYVVRQLGL (281 aa)) form an amidoligase domain region. CTP is bound at residue Ser-23. UTP is bound at residue Ser-23. Residues 24 to 29 (SLGKGL) and Asp-81 each bind ATP. Residues Asp-81 and Glu-155 each contribute to the Mg(2+) site. Residues 162–164 (DIE), 202–207 (KTKPTQ), and Lys-238 contribute to the CTP site. UTP contacts are provided by residues 202-207 (KTKPTQ) and Lys-238. The Glutamine amidotransferase type-1 domain occupies 306-554 (RIALVGKYVD…VDAALKHKLE (249 aa)). Position 369 (Gly-369) interacts with L-glutamine. Cys-396 serves as the catalytic Nucleophile; for glutamine hydrolysis. L-glutamine is bound by residues 397–400 (LGLQ), Glu-419, and Arg-480. Active-site residues include His-527 and Glu-529. The segment at 568–591 (AVATDDELADSADRDEVASVDSAG) is disordered.

Belongs to the CTP synthase family. Homotetramer.

It carries out the reaction UTP + L-glutamine + ATP + H2O = CTP + L-glutamate + ADP + phosphate + 2 H(+). It catalyses the reaction L-glutamine + H2O = L-glutamate + NH4(+). The enzyme catalyses UTP + NH4(+) + ATP = CTP + ADP + phosphate + 2 H(+). Its pathway is pyrimidine metabolism; CTP biosynthesis via de novo pathway; CTP from UDP: step 2/2. Its activity is regulated as follows. Allosterically activated by GTP, when glutamine is the substrate; GTP has no effect on the reaction when ammonia is the substrate. The allosteric effector GTP functions by stabilizing the protein conformation that binds the tetrahedral intermediate(s) formed during glutamine hydrolysis. Inhibited by the product CTP, via allosteric rather than competitive inhibition. Catalyzes the ATP-dependent amination of UTP to CTP with either L-glutamine or ammonia as the source of nitrogen. Regulates intracellular CTP levels through interactions with the four ribonucleotide triphosphates. The polypeptide is CTP synthase (Rhodococcus jostii (strain RHA1)).